The primary structure comprises 120 residues: Chaperonin GroEL (120 aa).

23–27 (DGTTT) contacts ATP.

This sequence belongs to the chaperonin (HSP60) family. As to quaternary structure, forms a cylinder of 14 subunits composed of two heptameric rings stacked back-to-back. Interacts with the co-chaperonin GroES.

The protein resides in the cytoplasm. It catalyses the reaction ATP + H2O + a folded polypeptide = ADP + phosphate + an unfolded polypeptide.. Functionally, together with its co-chaperonin GroES, plays an essential role in assisting protein folding. The GroEL-GroES system forms a nano-cage that allows encapsulation of the non-native substrate proteins and provides a physical environment optimized to promote and accelerate protein folding. The polypeptide is Chaperonin GroEL (Mycobacterium shimoidei).